Reading from the N-terminus, the 315-residue chain is BTB/POZ domain-containing adapter for CUL3-mediated RhoA degradation protein 3 (315 aa).

Position 1 is an N-acetylmethionine (M1). At S23 the chain carries Phosphoserine. The BTB domain maps to 32 to 100 (KYVKLNVGGA…LRDGAVPLPE (69 aa)). An Interaction with PCNA motif is present at residues 239 to 245 (QTKVEFP). The interval 269–294 (NALLEATGGAAGRSHHLDEDEERERE) is disordered.

It belongs to the BACURD family. As to quaternary structure, homotetramer; forms a two-fold symmetric tetramer in solution. Interacts with CUL3; interaction is direct and forms a 5:5 heterodecamer. Component of the BCR(BACURD3) E3 ubiquitin ligase complex, at least composed of CUL3, KCTD10/BACURD3 and RBX1. Interacts with DNA polymerase delta subunit 2/POLD2. Interacts with PCNA. As to expression, expressed at highest levels in lung. Also detected in testis and heart. Very low expression, if any, in brain, liver, spleen, kidney and skeletal muscle.

It localises to the nucleus. Its pathway is protein modification; protein ubiquitination. Functionally, substrate-specific adapter of a BCR (BTB-CUL3-RBX1) E3 ubiquitin-protein ligase complex. The BCR(BACURD3) E3 ubiquitin ligase complex mediates the ubiquitination of target proteins, leading to their degradation by the proteasome. The chain is BTB/POZ domain-containing adapter for CUL3-mediated RhoA degradation protein 3 (Kctd10) from Rattus norvegicus (Rat).